We begin with the raw amino-acid sequence, 187 residues long: Early nodulin-55-2 (187 aa).

The first 26 residues, 1 to 26 (MASCLPNASPFLVMLAMCLLISTSEA), serve as a signal peptide directing secretion. In terms of domain architecture, Phytocyanin spans 27 to 132 (EKYVVGGSEK…GLKLAVLVIS (106 aa)). Residues N78, N116, and N134 are each glycosylated (N-linked (GlcNAc...) asparagine). A disulfide bridge links C85 with C120. Residues 138-167 (KNLLSPSPSPSPPPSSLLSPSPSPLPNNQG) are disordered. Residues 144–162 (SPSPSPPPSSLLSPSPSPL) show a composition bias toward pro residues.

It belongs to the early nodulin-like (ENODL) family.

Its subcellular location is the symbiosome. The protein localises to the peribacteroid membrane. In terms of biological role, may act as a carbohydrate transporter. This chain is Early nodulin-55-2, found in Glycine max (Soybean).